The chain runs to 629 residues: MQTSVTPDAISTVLSNPSFDSSSDRSEIVVQVVDLKPIGNRYTFSANDGKTKVKAMFTASLTPEIISGKIQNLGLIRLIDFTVNDISSKSTKYFLVTKCEAVGSVLDSEINLDSKSGEEEAREPKKQKLEHSPVSPLNDVVSTGITLKPKQEFVAKSASQIMSEQRGNAAPAARMAMTRRVHPLVSLNPYQGNWTIKVRVTNKGVMRNYKNARGEGCVFNVELTDEEGTQIQATMFNDAARKFFDRFQLGKVYYISRGSLKLANKQFKTVQNDYEMTLNENSEVEEASSEEMFIPETKFNFVPIEELGLYVNQKELIDLIGVVQSVSPTMSIRRRTDNEMIPKRDITLADESRKTVVVSLWNDLATGIGQELLDMADQSPVIAIKSLKVGDFQGVSLSTISRSNVVINPESPEAKKLKSWFDSEGKEISMSSIGSGMSPSAKNGSRSLYTDRVLLSHITSNPSLFEEKPVFFSTRAYISFIKPDQTMWYQACKTCNKKVTEALDSGYWCEGCQRKYEECSLRYIMAVKVTDSSGETWISSFNDEAEKILGCSADELNKLKSEEGEVNEYQTKLKEATWSSHVFRVSVTQNEYNGEKRQRVTVKGVAPLDFAAETRLLLQDISNKNKTSQ.

Residues L112 to S135 are disordered. Residues K115–H131 show a composition bias toward basic and acidic residues. The OB DNA-binding region spans W194 to E280. The C4-type zinc-finger motif lies at C492–C512.

It belongs to the replication factor A protein 1 family. As to quaternary structure, heterotrimer of RPA1, RPA2 and RPA3 (canonical replication protein A complex).

It is found in the nucleus. Its function is as follows. Component of the replication protein A complex (RPA) required for DNA recombination, repair and replication. The activity of RPA is mediated by single-stranded DNA binding and protein interactions. Probably involved in repair of double-strand DNA breaks (DSBs) induced by genotoxic stresses. The polypeptide is Replication protein A 70 kDa DNA-binding subunit D (RPA1D) (Arabidopsis thaliana (Mouse-ear cress)).